A 63-amino-acid chain; its full sequence is MPKMKTVRGAAKRFKVGKNKIKRGSAFRSHILTKKPSKRMRDLRGPHYVDGTNVSAVKKMLGV.

It belongs to the bacterial ribosomal protein bL35 family.

In Campylobacter curvus (strain 525.92), this protein is Large ribosomal subunit protein bL35.